The primary structure comprises 430 residues: Glutamate-1-semialdehyde 2,1-aminomutase (430 aa).

Lys-267 is subject to N6-(pyridoxal phosphate)lysine.

This sequence belongs to the class-III pyridoxal-phosphate-dependent aminotransferase family. HemL subfamily. In terms of assembly, homodimer. It depends on pyridoxal 5'-phosphate as a cofactor.

The protein resides in the cytoplasm. It catalyses the reaction (S)-4-amino-5-oxopentanoate = 5-aminolevulinate. It functions in the pathway porphyrin-containing compound metabolism; protoporphyrin-IX biosynthesis; 5-aminolevulinate from L-glutamyl-tRNA(Glu): step 2/2. This chain is Glutamate-1-semialdehyde 2,1-aminomutase, found in Natranaerobius thermophilus (strain ATCC BAA-1301 / DSM 18059 / JW/NM-WN-LF).